The chain runs to 464 residues: Agamous-like MADS-box protein AGL92 (464 aa).

The 60-residue stretch at 1–60 folds into the MADS-box domain; it reads MRTKTKLVLIPDRHFRRATFRKRNAGIRKKLHELTTLCDIKACAVIYSPFENPTVWPSTE. Residues 85 to 114 adopt a coiled-coil conformation; it reads ETFLRDQITKEQNKLESLRRENRETQLKHF. Positions 443–464 are disordered; it reads TSTGHMPSTTTTTTNNNNNNNV. Positions 451-464 are enriched in low complexity; the sequence is TTTTTTNNNNNNNV.

Interacts with AGL62.

The protein resides in the nucleus. Functionally, putative transcription factor. This is Agamous-like MADS-box protein AGL92 (AGL92) from Arabidopsis thaliana (Mouse-ear cress).